A 388-amino-acid chain; its full sequence is Ribosomal RNA large subunit methyltransferase F (388 aa).

Polar residues predominate over residues 1-22 (MKTNNHNAKQAQTKTAKSNPSK). The interval 1 to 51 (MKTNNHNAKQAQTKTAKSNPSKEVTKIKPKRVKNKPTAKAAKSTGLKTNAA) is disordered. Residues 27 to 36 (IKPKRVKNKP) show a composition bias toward basic residues.

This sequence belongs to the methyltransferase superfamily. METTL16/RlmF family.

It is found in the cytoplasm. It catalyses the reaction adenosine(1618) in 23S rRNA + S-adenosyl-L-methionine = N(6)-methyladenosine(1618) in 23S rRNA + S-adenosyl-L-homocysteine + H(+). Functionally, specifically methylates the adenine in position 1618 of 23S rRNA. The protein is Ribosomal RNA large subunit methyltransferase F of Vibrio campbellii (strain ATCC BAA-1116).